A 90-amino-acid chain; its full sequence is Cuticle protein 9.5 (90 aa).

Its function is as follows. Component of the cuticle of migratory locust which contains more than 100 different structural proteins. This is Cuticle protein 9.5 from Locusta migratoria (Migratory locust).